The primary structure comprises 578 residues: Adenine deaminase (578 aa).

This sequence belongs to the metallo-dependent hydrolases superfamily. Adenine deaminase family. Mn(2+) is required as a cofactor.

It carries out the reaction adenine + H2O + H(+) = hypoxanthine + NH4(+). In Ligilactobacillus salivarius (strain UCC118) (Lactobacillus salivarius), this protein is Adenine deaminase.